The following is a 157-amino-acid chain: Endoribonuclease YbeY (157 aa).

The Zn(2+) site is built by histidine 111, histidine 115, and histidine 121. The interval 136-157 is disordered; it reads ELLAELGHPDPYADDETDSITH. Positions 147-157 are enriched in acidic residues; that stretch reads YADDETDSITH.

Belongs to the endoribonuclease YbeY family. Requires Zn(2+) as cofactor.

Its subcellular location is the cytoplasm. Functionally, single strand-specific metallo-endoribonuclease involved in late-stage 70S ribosome quality control and in maturation of the 3' terminus of the 16S rRNA. This is Endoribonuclease YbeY from Pseudomonas putida (strain ATCC 700007 / DSM 6899 / JCM 31910 / BCRC 17059 / LMG 24140 / F1).